Reading from the N-terminus, the 350-residue chain is Protein-glutamate methylesterase/protein-glutamine glutaminase (350 aa).

The Response regulatory domain occupies 5 to 122; that stretch reads KVLCVDDSAL…RDGLIEYSEV (118 aa). Asp56 bears the 4-aspartylphosphate mark. Residues 152–346 form the CheB-type methylesterase domain; the sequence is PFASSEKLVI…ERILTRLGDR (195 aa). Active-site residues include Ser165, His191, and Asp288.

The protein belongs to the CheB family. In terms of processing, phosphorylated by CheA. Phosphorylation of the N-terminal regulatory domain activates the methylesterase activity.

It is found in the cytoplasm. The enzyme catalyses [protein]-L-glutamate 5-O-methyl ester + H2O = L-glutamyl-[protein] + methanol + H(+). It carries out the reaction L-glutaminyl-[protein] + H2O = L-glutamyl-[protein] + NH4(+). Involved in chemotaxis. Part of a chemotaxis signal transduction system that modulates chemotaxis in response to various stimuli. Catalyzes the demethylation of specific methylglutamate residues introduced into the chemoreceptors (methyl-accepting chemotaxis proteins or MCP) by CheR. Also mediates the irreversible deamidation of specific glutamine residues to glutamic acid. The sequence is that of Protein-glutamate methylesterase/protein-glutamine glutaminase from Bordetella pertussis (strain Tohama I / ATCC BAA-589 / NCTC 13251).